Here is a 168-residue protein sequence, read N- to C-terminus: Peptide deformylase 1 (168 aa).

Residues Cys-92 and His-134 each coordinate Fe cation. The active site involves Glu-135. Residue His-138 coordinates Fe cation.

It belongs to the polypeptide deformylase family. Fe(2+) is required as a cofactor.

It catalyses the reaction N-terminal N-formyl-L-methionyl-[peptide] + H2O = N-terminal L-methionyl-[peptide] + formate. Functionally, removes the formyl group from the N-terminal Met of newly synthesized proteins. Requires at least a dipeptide for an efficient rate of reaction. N-terminal L-methionine is a prerequisite for activity but the enzyme has broad specificity at other positions. The sequence is that of Peptide deformylase 1 from Pseudomonas syringae pv. tomato (strain ATCC BAA-871 / DC3000).